The sequence spans 316 residues: tRNA methyltransferase 10 homolog B (316 aa).

Positions 73–97 (EKIVAAKKSKRKQEKERRKANRAEN) form a coiled coil. Residues 77–98 (AAKKSKRKQEKERRKANRAENP) are disordered. An SAM-dependent MTase TRM10-type domain is found at 113-310 (TKDKLLEAKH…KGVSSGKGYI (198 aa)).

This sequence belongs to the class IV-like SAM-binding methyltransferase superfamily. TRM10 family.

It carries out the reaction guanosine(9) in tRNA + S-adenosyl-L-methionine = N(1)-methylguanosine(9) in tRNA + S-adenosyl-L-homocysteine + H(+). In terms of biological role, S-adenosyl-L-methionine-dependent guanine N(1)-methyltransferase that catalyzes the formation of N(1)-methylguanine at position 9 (m1G9) in tRNAs. Probably not able to catalyze formation of N(1)-methyladenine at position 9 (m1A9) in tRNAs. The sequence is that of tRNA methyltransferase 10 homolog B (TRMT10B) from Homo sapiens (Human).